A 49-amino-acid chain; its full sequence is Large ribosomal subunit protein eL40 (49 aa).

The protein belongs to the eukaryotic ribosomal protein eL40 family.

The protein is Large ribosomal subunit protein eL40 of Archaeoglobus fulgidus (strain ATCC 49558 / DSM 4304 / JCM 9628 / NBRC 100126 / VC-16).